The chain runs to 116 residues: Acyl-CoA-binding protein homolog 3 (116 aa).

One can recognise an ACB domain in the interval 3-92; it reads LQEKFDAAVE…LNDMFDKIAE (90 aa). Residues 34-38, Lys-60, and Tyr-79 contribute to the an acyl-CoA site; that span reads YSLFK.

It belongs to the ACBP family.

Its function is as follows. Binds medium- and long-chain acyl-CoA esters with very high affinity and may function as an intracellular carrier of acyl-CoA esters. This Caenorhabditis elegans protein is Acyl-CoA-binding protein homolog 3 (acbp-3).